Here is a 258-residue protein sequence, read N- to C-terminus: Imidazole glycerol phosphate synthase subunit HisF (258 aa).

Catalysis depends on residues D11 and D130.

It belongs to the HisA/HisF family. Heterodimer of HisH and HisF.

The protein resides in the cytoplasm. The catalysed reaction is 5-[(5-phospho-1-deoxy-D-ribulos-1-ylimino)methylamino]-1-(5-phospho-beta-D-ribosyl)imidazole-4-carboxamide + L-glutamine = D-erythro-1-(imidazol-4-yl)glycerol 3-phosphate + 5-amino-1-(5-phospho-beta-D-ribosyl)imidazole-4-carboxamide + L-glutamate + H(+). Its pathway is amino-acid biosynthesis; L-histidine biosynthesis; L-histidine from 5-phospho-alpha-D-ribose 1-diphosphate: step 5/9. Its function is as follows. IGPS catalyzes the conversion of PRFAR and glutamine to IGP, AICAR and glutamate. The HisF subunit catalyzes the cyclization activity that produces IGP and AICAR from PRFAR using the ammonia provided by the HisH subunit. In Azorhizobium caulinodans (strain ATCC 43989 / DSM 5975 / JCM 20966 / LMG 6465 / NBRC 14845 / NCIMB 13405 / ORS 571), this protein is Imidazole glycerol phosphate synthase subunit HisF.